A 474-amino-acid polypeptide reads, in one-letter code: Siroheme synthase (474 aa).

The tract at residues 1–203 (MDYLPIFLKL…GRAEDAERVL (203 aa)) is precorrin-2 dehydrogenase /sirohydrochlorin ferrochelatase. NAD(+) is bound by residues 22–23 (EV) and 43–44 (AS). A uroporphyrinogen-III C-methyltransferase region spans residues 219 to 474 (GSVALVGAGP…QETEGRSGNG (256 aa)). Proline 228 lines the S-adenosyl-L-methionine pocket. Aspartate 251 acts as the Proton acceptor in catalysis. The active-site Proton donor is the lysine 273. S-adenosyl-L-methionine contacts are provided by residues 304–306 (GGD), isoleucine 309, 334–335 (TA), methionine 387, and glycine 416.

This sequence in the N-terminal section; belongs to the precorrin-2 dehydrogenase / sirohydrochlorin ferrochelatase family. In the C-terminal section; belongs to the precorrin methyltransferase family.

The catalysed reaction is uroporphyrinogen III + 2 S-adenosyl-L-methionine = precorrin-2 + 2 S-adenosyl-L-homocysteine + H(+). It catalyses the reaction precorrin-2 + NAD(+) = sirohydrochlorin + NADH + 2 H(+). It carries out the reaction siroheme + 2 H(+) = sirohydrochlorin + Fe(2+). It participates in cofactor biosynthesis; adenosylcobalamin biosynthesis; precorrin-2 from uroporphyrinogen III: step 1/1. Its pathway is cofactor biosynthesis; adenosylcobalamin biosynthesis; sirohydrochlorin from precorrin-2: step 1/1. The protein operates within porphyrin-containing compound metabolism; siroheme biosynthesis; precorrin-2 from uroporphyrinogen III: step 1/1. It functions in the pathway porphyrin-containing compound metabolism; siroheme biosynthesis; siroheme from sirohydrochlorin: step 1/1. It participates in porphyrin-containing compound metabolism; siroheme biosynthesis; sirohydrochlorin from precorrin-2: step 1/1. Functionally, multifunctional enzyme that catalyzes the SAM-dependent methylations of uroporphyrinogen III at position C-2 and C-7 to form precorrin-2 via precorrin-1. Then it catalyzes the NAD-dependent ring dehydrogenation of precorrin-2 to yield sirohydrochlorin. Finally, it catalyzes the ferrochelation of sirohydrochlorin to yield siroheme. The polypeptide is Siroheme synthase (Methylococcus capsulatus (strain ATCC 33009 / NCIMB 11132 / Bath)).